The primary structure comprises 434 residues: uncharacterized protein (434 aa).

Transmembrane regions (helical) follow at residues 27–47, 64–84, 244–264, 289–309, and 387–407; these read IFLL…QSVI, FYLS…FVNW, IILA…ATVL, VPVN…PSLL, and LILT…GAVF.

It belongs to the CbiQ family.

Its subcellular location is the cell membrane. This is an uncharacterized protein from Mycoplasma pneumoniae (strain ATCC 29342 / M129 / Subtype 1) (Mycoplasmoides pneumoniae).